Reading from the N-terminus, the 117-residue chain is Photosystem II reaction center Psb28 protein (117 aa).

This sequence belongs to the Psb28 family. In terms of assembly, part of the photosystem II complex.

It is found in the cellular thylakoid membrane. The chain is Photosystem II reaction center Psb28 protein from Prochlorococcus marinus (strain MIT 9215).